A 347-amino-acid polypeptide reads, in one-letter code: 5-deoxyribose 1-phosphate isomerase (347 aa).

Substrate contacts are provided by residues 48–50 (RGA), Arg-91, and Gln-198. Asp-239 serves as the catalytic Proton donor. Substrate is bound at residue 249 to 250 (NK).

Belongs to the EIF-2B alpha/beta/delta subunits family. DrdI subfamily.

The catalysed reaction is 5-deoxy-alpha-D-ribose 1-phosphate = 5-deoxy-D-ribulose 1-phosphate. It functions in the pathway carbohydrate degradation. In terms of biological role, catalyzes the isomerization of 5-deoxy-alpha-D-ribose 1-phosphate to 5-deoxy-D-ribulose 1-phosphate, as part of a 5-deoxyribose salvage pathway that recycles this toxic radical SAM enzyme by-product to mainstream metabolites. This Bacillus cereus (strain ATCC 14579 / DSM 31 / CCUG 7414 / JCM 2152 / NBRC 15305 / NCIMB 9373 / NCTC 2599 / NRRL B-3711) protein is 5-deoxyribose 1-phosphate isomerase.